A 300-amino-acid chain; its full sequence is Type 1 fimbrin D-mannose specific adhesin (300 aa).

Positions 1 to 21 (MKRVITLFAVLLMGWSVNAWS) are cleaved as a signal peptide.

Belongs to the fimbrial protein family.

The protein localises to the fimbrium. Its function is as follows. Involved in regulation of length and mediation of adhesion of type 1 fimbriae (but not necessary for the production of fimbriae). Adhesin responsible for the binding to D-mannose. It is laterally positioned at intervals in the structure of the type 1 fimbriae. In order to integrate FimH in the fimbriae FimF and FimG are needed. The protein is Type 1 fimbrin D-mannose specific adhesin (fimH) of Escherichia coli (strain K12).